Consider the following 805-residue polypeptide: Probable phosphoketolase (805 aa).

This sequence belongs to the XFP family. Thiamine diphosphate is required as a cofactor.

This Synechocystis sp. (strain ATCC 27184 / PCC 6803 / Kazusa) protein is Probable phosphoketolase.